The following is a 274-amino-acid chain: DegV domain-containing protein Cgl2349/cg2579 (274 aa).

A DegV domain is found at 3 to 259; the sequence is VRVIVDSSAC…PGAVSVSAVF (257 aa). Hexadecanoate contacts are provided by Thr39 and Ser73.

In terms of assembly, monomer.

Its function is as follows. Binds long-chain fatty acids, such as palmitate, and may play a role in lipid transport or fatty acid metabolism. The protein is DegV domain-containing protein Cgl2349/cg2579 of Corynebacterium glutamicum (strain ATCC 13032 / DSM 20300 / JCM 1318 / BCRC 11384 / CCUG 27702 / LMG 3730 / NBRC 12168 / NCIMB 10025 / NRRL B-2784 / 534).